Reading from the N-terminus, the 365-residue chain is Glycerol dehydrogenase (365 aa).

Asp-37, Gly-94, Lys-95, Thr-116, and Ser-119 together coordinate NAD(+). Residue Asp-121 participates in glycerol binding. NAD(+)-binding residues include Ser-125, Leu-127, and Tyr-131. Asp-171, His-254, and His-271 together coordinate Mn(2+). Glycerol is bound at residue His-254.

This sequence belongs to the iron-containing alcohol dehydrogenase family. Homohexamer. The cofactor is Mn(2+).

It carries out the reaction glycerol + NAD(+) = dihydroxyacetone + NADH + H(+). The catalysed reaction is hydroxyacetone + NADH + H(+) = (S)-propane-1,2-diol + NAD(+). It functions in the pathway polyol metabolism; glycerol fermentation; glycerone phosphate from glycerol (oxidative route): step 1/2. Inhibited by zinc. Functionally, catalyzes the NAD-dependent oxidation of glycerol to dihydroxyacetone (glycerone). Allows microorganisms to utilize glycerol as a source of carbon under anaerobic conditions. Exhibits a rather broad substrate specificity since it can also oxidize 1,2-propanediol and 2,3-butanediol and reduce dihydroxyacetone. Cannot use NADP(+) as an electron acceptor for the oxidation of glycerol. In Citrobacter freundii, this protein is Glycerol dehydrogenase.